The primary structure comprises 527 residues: Plant-specific TFIIB-related protein PTF2 (527 aa).

The TFIIB-type zinc finger occupies 1 to 30 (MRCKRCNGSNFERDEDTGNSYCGGCGTLRE).

Can form homodimer. Interacts with TBP2. As to expression, expressed in shoot apical meristems, root tips, primordia of lateral roots, inflorescences, developing pollen grains and embryos.

The protein resides in the nucleus. Functionally, plant-specific TFIIB-related protein that plays important roles in pollen germination and embryogenesis, possibly by regulating gene expression through interaction with TBP2 and the subunits of RNA polymerases. Binds double-stranded DNA in vitro. The chain is Plant-specific TFIIB-related protein PTF2 from Arabidopsis thaliana (Mouse-ear cress).